Consider the following 23-residue polypeptide: ALGGVLKALAKGLPSVISWINQK.

K23 is subject to Lysine amide.

In terms of tissue distribution, expressed by the skin glands.

Its subcellular location is the secreted. This is Melittin-related peptide AK-23-1 from Rana arvalis (Moor frog).